The following is a 397-amino-acid chain: L-asparaginase-like protein GM15681 (397 aa).

The N-terminal stretch at 1–22 (MLAQSCCLRLLILLLLFTSICS) is a signal peptide. Cystine bridges form between cysteine 90–cysteine 95, cysteine 189–cysteine 205, and cysteine 344–cysteine 371.

It belongs to the Ntn-hydrolase family.

This Drosophila sechellia (Fruit fly) protein is L-asparaginase-like protein GM15681.